Consider the following 71-residue polypeptide: MIVDLESRVTDLETRLAFQDDTIQALNDVLVEQQRLVERLQLQLVALAKRQEEMQGSLGAADEDEAPPPHY.

Belongs to the SlyX family.

This Stutzerimonas stutzeri (strain A1501) (Pseudomonas stutzeri) protein is Protein SlyX homolog.